Reading from the N-terminus, the 224-residue chain is MIVIENILGQDVLTEVAAALRELRWEDGRNTAGATARRVKRNQQADLSSRTGSKVREVLLEAVKRHPVVEAYARPLKFAPPLISCSGEGDAYGLHIDNPVMGKGDARLRTDLSFTLFLSPPESYDGGELEIETVFKTESVKLPAGSMVIYPSTELHRVTPVTSGERFVFVGWIQSAIKDAAQRAILFDVTNLKAGLARRFPPGSPELLTLAKTESNLIRMWSDI.

Positions 77–175 (KFAPPLISCS…RFVFVGWIQS (99 aa)) constitute a Fe2OG dioxygenase domain. Residues His95, Asp97, and His156 each contribute to the Fe cation site. Arg166 provides a ligand contact to 2-oxoglutarate.

Fe(2+) serves as cofactor. L-ascorbate is required as a cofactor.

The sequence is that of PKHD-type hydroxylase HNE_1625 from Hyphomonas neptunium (strain ATCC 15444).